The primary structure comprises 126 residues: FCS-Like Zinc finger 17 (126 aa).

Residues 41-85 form an FLZ-type zinc finger; sequence CFLKTCHLCNKQLHQDKDVYMYRGDLGFCSRECRESQMLIDDRKE.

The protein belongs to the FLZ family. In terms of assembly, interacts with KIN10 and KIN11 via its FLZ-type zinc finger domain. Forms heterodimer with FLZ2 in vitro.

It localises to the nucleus. It is found in the cytoplasm. In terms of biological role, may act as an adapter to facilitate the interaction of SnRK1 complex with effector proteins, conferring tissue- and stimulus-type specific differences in the SnRK1 regulation pathway. The sequence is that of FCS-Like Zinc finger 17 from Arabidopsis thaliana (Mouse-ear cress).